The following is a 287-amino-acid chain: MDFVLNTIQWLREVPHNFKGEFATVVFDDSADILVYCCVLYILLVFMVPEHIMKNREPFNLRLPFVFWNIGLCLFSFCGAYSCVKNMIALYWERGFYRTTCFFDSSVAYDGEFAFWVFYFILSKIPEMIDTVFLVFQKKPVIFLHWYHHLTVAIFCWHAGHALIPSGLWFATMNYCVHSIMYFYYFMCACGMRKFIRPIAPFITMMQLLQMVAGTLIVLYTAYHSYLGESGCEVDRTSIRLGLVMYGSYFFLFAVLFGKLYLKKQVKPSGTASAYAMSKKRNGEKMA.

A run of 3 helical transmembrane segments spans residues isoleucine 33–methionine 53, proline 64–valine 84, and phenylalanine 115–valine 135. The HxxHH motif signature appears at histidine 145–histidine 149. Histidine 148 serves as the catalytic Nucleophile. The next 4 membrane-spanning stretches (helical) occupy residues leucine 150–phenylalanine 170, threonine 172–methionine 192, isoleucine 199–leucine 219, and leucine 241–tyrosine 261.

Belongs to the ELO family.

It localises to the membrane. The catalysed reaction is a very-long-chain acyl-CoA + malonyl-CoA + H(+) = a very-long-chain 3-oxoacyl-CoA + CO2 + CoA. Functionally, involved in the synthesis of fatty acids. Elongates C16:0 and C18:0 fatty acids to C26:0, with C24:0 being the main product. This Trypanosoma cruzi (strain CL Brener) protein is Very long chain fatty acid elongase 4.